Consider the following 330-residue polypeptide: MASWVGTELSALNPLRTLWLALAAAFLLALLLQLAPAGLLPNCALFQDLIRYGKTKLSGPRRPAVCRAFDVPKRYFSHFYVVSVLWNGFLLWFLSRSLFLGAPFPNWLRALLRTLGSTQFRALEMESKASQMLVGELALSAFLVLVFLWVHSVRRLFECFYISVFSNAVMHVVQYCFGLVYYVLVGLTVLSQVPMDDKNVYMLGKNLLLPARWFHVLGMMMFLWSSAHQYECHVILSNLRRNKKGAIVHCQHRIPFGDWFEYVSSANYLAELMIYISMAVTFGFHNFTWWLVVAYVFFCQALSAFFNHKFYKSTFVSYPKHRKAFLPFLF.

The Cytoplasmic portion of the chain corresponds to 1-19; sequence MASWVGTELSALNPLRTLW. The helical transmembrane segment at 20 to 40 threads the bilayer; sequence LALAAAFLLALLLQLAPAGLL. Residues 41–74 lie on the Lumenal side of the membrane; it reads PNCALFQDLIRYGKTKLSGPRRPAVCRAFDVPKR. The helical transmembrane segment at 75 to 95 threads the bilayer; the sequence is YFSHFYVVSVLWNGFLLWFLS. The Cytoplasmic segment spans residues 96–132; the sequence is RSLFLGAPFPNWLRALLRTLGSTQFRALEMESKASQM. The chain crosses the membrane as a helical span at residues 133–153; sequence LVGELALSAFLVLVFLWVHSV. At 154-168 the chain is on the lumenal side; that stretch reads RRLFECFYISVFSNA. Residues 169 to 189 form a helical membrane-spanning segment; that stretch reads VMHVVQYCFGLVYYVLVGLTV. The Cytoplasmic segment spans residues 190 to 206; that stretch reads LSQVPMDDKNVYMLGKN. A helical membrane pass occupies residues 207–227; the sequence is LLLPARWFHVLGMMMFLWSSA. Residues 228 to 277 lie on the Lumenal side of the membrane; that stretch reads HQYECHVILSNLRRNKKGAIVHCQHRIPFGDWFEYVSSANYLAELMIYIS. A helical transmembrane segment spans residues 278–298; that stretch reads MAVTFGFHNFTWWLVVAYVFF. At 299 to 330 the chain is on the cytoplasmic side; sequence CQALSAFFNHKFYKSTFVSYPKHRKAFLPFLF.

The protein belongs to the steroid 5-alpha reductase family. Polyprenal reductase subfamily.

It localises to the endoplasmic reticulum membrane. It carries out the reaction a di-trans,poly-cis-dolichal + NADP(+) = a di-trans,poly-cis-polyprenal + NADPH + H(+). The enzyme catalyses a 3-oxo-5alpha-steroid + NADP(+) = a 3-oxo-Delta(4)-steroid + NADPH + H(+). It catalyses the reaction androst-4-ene-3,17-dione + NADPH + H(+) = 5alpha-androstan-3,17-dione + NADP(+). The catalysed reaction is 17beta-hydroxy-5alpha-androstan-3-one + NADP(+) = testosterone + NADPH + H(+). The protein operates within protein modification; protein glycosylation. Plays a key role in early steps of protein N-linked glycosylation by being involved in the conversion of polyprenol into dolichol. Acts as a polyprenal reductase that mediates the reduction of polyprenal into dolichal in a NADP-dependent mechanism. Dolichols are required for the synthesis of dolichol-linked monosaccharides and the oligosaccharide precursor used for N-glycosylation. Also able to convert testosterone (T) into 5-alpha-dihydrotestosterone (DHT). The sequence is that of Polyprenal reductase from Mesocricetus auratus (Golden hamster).